We begin with the raw amino-acid sequence, 330 residues long: Ketol-acid reductoisomerase (NADP(+)) (330 aa).

A KARI N-terminal Rossmann domain is found at 1-181 (MNAYYEQDAD…GGTKAGVIET (181 aa)). NADP(+) is bound by residues 24–27 (YGSQ), R47, S50, S52, and 82–85 (DQYQ). H107 is a catalytic residue. G133 is an NADP(+) binding site. A KARI C-terminal knotted domain is found at 182 to 327 (TFKNETETDL…SKLRDMMSWL (146 aa)). Mg(2+) is bound by residues D190, E194, E226, and E230. S251 provides a ligand contact to substrate.

This sequence belongs to the ketol-acid reductoisomerase family. The cofactor is Mg(2+).

The catalysed reaction is (2R)-2,3-dihydroxy-3-methylbutanoate + NADP(+) = (2S)-2-acetolactate + NADPH + H(+). It carries out the reaction (2R,3R)-2,3-dihydroxy-3-methylpentanoate + NADP(+) = (S)-2-ethyl-2-hydroxy-3-oxobutanoate + NADPH + H(+). It participates in amino-acid biosynthesis; L-isoleucine biosynthesis; L-isoleucine from 2-oxobutanoate: step 2/4. Its pathway is amino-acid biosynthesis; L-valine biosynthesis; L-valine from pyruvate: step 2/4. Its function is as follows. Involved in the biosynthesis of branched-chain amino acids (BCAA). Catalyzes an alkyl-migration followed by a ketol-acid reduction of (S)-2-acetolactate (S2AL) to yield (R)-2,3-dihydroxy-isovalerate. In the isomerase reaction, S2AL is rearranged via a Mg-dependent methyl migration to produce 3-hydroxy-3-methyl-2-ketobutyrate (HMKB). In the reductase reaction, this 2-ketoacid undergoes a metal-dependent reduction by NADPH to yield (R)-2,3-dihydroxy-isovalerate. This is Ketol-acid reductoisomerase (NADP(+)) from Chlorobium limicola (strain DSM 245 / NBRC 103803 / 6330).